We begin with the raw amino-acid sequence, 148 residues long: Ferredoxin-thioredoxin reductase catalytic chain, chloroplastic (148 aa).

Residues 1-35 (MKALQASTSYSFFSKSSSATLQRRTHRPQCVILSK) constitute a chloroplast transit peptide. Cys87 contacts [4Fe-4S] cluster. The active-site Nucleophile is the Cys89. Cys89 and Cys119 are oxidised to a cystine. 3 residues coordinate [4Fe-4S] cluster: Cys106, Cys108, and Cys117.

The protein belongs to the ferredoxin thioredoxin reductase beta subunit family. In terms of assembly, heterodimer of subunit A (variable subunit) and subunit B (catalytic subunit). Heterodimeric FTR forms a complex with ferredoxin and thioredoxin. [4Fe-4S] cluster serves as cofactor.

Its subcellular location is the plastid. It localises to the chloroplast. It carries out the reaction [thioredoxin]-disulfide + 2 reduced [2Fe-2S]-[ferredoxin] + 2 H(+) = [thioredoxin]-dithiol + 2 oxidized [2Fe-2S]-[ferredoxin]. In terms of biological role, catalytic subunit of the ferredoxin-thioredoxin reductase (FTR), which catalyzes the two-electron reduction of thioredoxins by the electrons provided by reduced ferredoxin. The sequence is that of Ferredoxin-thioredoxin reductase catalytic chain, chloroplastic from Spinacia oleracea (Spinach).